Here is a 115-residue protein sequence, read N- to C-terminus: Promotilin (115 aa).

An N-terminal signal peptide occupies residues 1-25; that stretch reads MLSRKATAVLLAVHAAAMLASQTEA. The disordered stretch occupies residues 43–72; sequence RYKGQKKSLSVQQRSEEVGPVDPTEPWEEK.

It belongs to the motilin family.

The protein localises to the secreted. In terms of biological role, plays an important role in the regulation of interdigestive gastrointestinal motility and indirectly causes rhythmic contraction of duodenal and colonic smooth muscle. The chain is Promotilin (MLN) from Bos taurus (Bovine).